The sequence spans 197 residues: Penicillin-binding protein activator LpoB (197 aa).

The first 17 residues, 1–17 (MIKRMSGIALAALLLSG), serve as a signal peptide directing secretion. Residue Cys18 is the site of N-palmitoyl cysteine attachment. Cys18 carries S-diacylglycerol cysteine lipidation. The segment at 23–57 (PRGETPSQPPAPTTPAKPSVVPTPTPPVVTPVPQP) is disordered. A compositionally biased stretch (pro residues) spans 29-57 (SQPPAPTTPAKPSVVPTPTPPVVTPVPQP).

This sequence belongs to the LpoB family. As to quaternary structure, interacts with PBP1b.

Its subcellular location is the cell outer membrane. In terms of biological role, regulator of peptidoglycan synthesis that is essential for the function of penicillin-binding protein 1B (PBP1b). The protein is Penicillin-binding protein activator LpoB of Edwardsiella piscicida.